A 1235-amino-acid chain; its full sequence is MADREYTLSQKQAINSSGHNILVSASAGSGKTSVLVERVIQKIINGEDVDRLLVVTFTEAAASEMKERIRAAIVKKINEVSDIELQNHFSMQLNKLNNANISTLHAFCMSIIRNYYYIIDLDPTFRIMDPTESELLKESVWADLREELYERDEDGKFALLTRNFSSDRSDEGLQDLILELFEFSNANPDPQAWLQQIAKNYEVPSDNVMDMEFIQQLLTEVKTKLMRIYRKDLDLTEQAINGGEPLKNAAEKFQNEVDDLKTIIDSLNGSWDDVQQAVSKMKFAQLPRGKKEEVQEFNAYAKSIRNDFKDEFNTIADKYFKLSSEQMIAVFKDAHDLMMKLIEVQNQFAERFLQEKLTRRSLDFSDLEHFALQIVLDDSEEGQAIRRDFQQKFNEVIVDEYQDINPLQETILTSVASPDPGNMFMVGDVKQSIYAFRMADPSLFISKNNQFKDEEQADERIILAENFRSMRNVDDFTNLIFNQVMDTEVGEIEYDDDAQLQFGAKYYPDEVQNNTEVMIYDDSQTDINDKEATPIISNKNDGQLQMIAQRIQKLFADHTQIYDKKEQKMRDLEYSDIALLHSTGSNNLEIVDTFKKYGIPIQVNNAQDYFQTTEVSIMMALLKIIDNPYQDIPLAAVLRSPMVGLKENELAFLRIGKKNGHYFEALLYFLNEAKLDSNNEFQMQLKTKITHFLEQLDHFSKLARQSTLVDLLWAIYDETGYLDYVGGMPDGPQRQNNLHALYDRAKGYEESSFKGLFQFVRFVEKMRDKNKDLAENPVVTDVKAVKLMTIHGSKGLEFPIVFLIDAEHGFNTMDEKGRYVLDRDAGMGITLKDFIHRLEIDTVQKNWIISIKKQKALAEKLRVLYVALTRAEQKLIITGAVNSADDTLNKWAEAVDTDETLIPAEARSKVSNFLDWIGMAIMRVPSVVEKYADYNTRKLQGTLIPDVELKIINSSELMDQQGLTALKSAQIPELQQLNAFDDIADVDKFKQIMNFKYHDEAATTTTAYQSVSEIKRVFDDPDKFELNFSEVDADQHIKPQNRFVTESLMAPRFMNEATKPKAAEIGTATHLILQQLDLNQPINETIIKDKIGELVMNRVLDEQVANRIRISTILDFFDSDLGQLMINHPENVHREEAFSLLLPAKGLFPKVKGDDDVLIHGIIDAYFEMEDRVILLDYKTDFVLPGSVEQGIEKVINRYQGQVNLYAQALGSILKRPVNEKYLYLLSIGRLVEIQ.

The UvrD-like helicase ATP-binding domain occupies 4-470; sequence REYTLSQKQA…IILAENFRSM (467 aa). 25 to 32 contacts ATP; it reads ASAGSGKT. Positions 501–795 constitute a UvrD-like helicase C-terminal domain; sequence QFGAKYYPDE…KLMTIHGSKG (295 aa).

It belongs to the helicase family. AddA subfamily. As to quaternary structure, heterodimer of AddA and AddB/RexB. The cofactor is Mg(2+).

The catalysed reaction is Couples ATP hydrolysis with the unwinding of duplex DNA by translocating in the 3'-5' direction.. It catalyses the reaction ATP + H2O = ADP + phosphate + H(+). In terms of biological role, the heterodimer acts as both an ATP-dependent DNA helicase and an ATP-dependent, dual-direction single-stranded exonuclease. Recognizes the chi site generating a DNA molecule suitable for the initiation of homologous recombination. The AddA nuclease domain is required for chi fragment generation; this subunit has the helicase and 3' -&gt; 5' nuclease activities. This Pediococcus pentosaceus (strain ATCC 25745 / CCUG 21536 / LMG 10740 / 183-1w) protein is ATP-dependent helicase/nuclease subunit A.